The sequence spans 495 residues: Maturase K (495 aa).

The protein belongs to the intron maturase 2 family. MatK subfamily.

It is found in the plastid. The protein localises to the chloroplast. Usually encoded in the trnK tRNA gene intron. Probably assists in splicing its own and other chloroplast group II introns. This Torreya californica (California nutmeg) protein is Maturase K.